The sequence spans 368 residues: Glutamyl-tRNA reductase (368 aa).

Residues Thr-43–Arg-46, Ser-89, Glu-94–Gln-96, and Gln-100 each bind substrate. Cys-44 serves as the catalytic Nucleophile. Gly-164 to Gly-169 is a binding site for NADP(+).

This sequence belongs to the glutamyl-tRNA reductase family. Homodimer.

The enzyme catalyses (S)-4-amino-5-oxopentanoate + tRNA(Glu) + NADP(+) = L-glutamyl-tRNA(Glu) + NADPH + H(+). It participates in porphyrin-containing compound metabolism; protoporphyrin-IX biosynthesis; 5-aminolevulinate from L-glutamyl-tRNA(Glu): step 1/2. Catalyzes the NADPH-dependent reduction of glutamyl-tRNA(Glu) to glutamate 1-semialdehyde (GSA). This chain is Glutamyl-tRNA reductase, found in Thermosipho melanesiensis (strain DSM 12029 / CIP 104789 / BI429).